Here is a 141-residue protein sequence, read N- to C-terminus: Phosphoribosyl-AMP cyclohydrolase (141 aa).

Position 91 (D91) interacts with Mg(2+). A Zn(2+)-binding site is contributed by C92. 2 residues coordinate Mg(2+): D93 and D95. 2 residues coordinate Zn(2+): C110 and C117.

It belongs to the PRA-CH family. As to quaternary structure, homodimer. Requires Mg(2+) as cofactor. Zn(2+) serves as cofactor.

It localises to the cytoplasm. The catalysed reaction is 1-(5-phospho-beta-D-ribosyl)-5'-AMP + H2O = 1-(5-phospho-beta-D-ribosyl)-5-[(5-phospho-beta-D-ribosylamino)methylideneamino]imidazole-4-carboxamide. It functions in the pathway amino-acid biosynthesis; L-histidine biosynthesis; L-histidine from 5-phospho-alpha-D-ribose 1-diphosphate: step 3/9. Its function is as follows. Catalyzes the hydrolysis of the adenine ring of phosphoribosyl-AMP. In Brucella anthropi (strain ATCC 49188 / DSM 6882 / CCUG 24695 / JCM 21032 / LMG 3331 / NBRC 15819 / NCTC 12168 / Alc 37) (Ochrobactrum anthropi), this protein is Phosphoribosyl-AMP cyclohydrolase.